The sequence spans 303 residues: UDP-3-O-acyl-N-acetylglucosamine deacetylase (303 aa).

Residues histidine 78, histidine 237, and aspartate 241 each coordinate Zn(2+). Histidine 264 functions as the Proton donor in the catalytic mechanism.

This sequence belongs to the LpxC family. The cofactor is Zn(2+).

It carries out the reaction a UDP-3-O-[(3R)-3-hydroxyacyl]-N-acetyl-alpha-D-glucosamine + H2O = a UDP-3-O-[(3R)-3-hydroxyacyl]-alpha-D-glucosamine + acetate. It functions in the pathway glycolipid biosynthesis; lipid IV(A) biosynthesis; lipid IV(A) from (3R)-3-hydroxytetradecanoyl-[acyl-carrier-protein] and UDP-N-acetyl-alpha-D-glucosamine: step 2/6. Catalyzes the hydrolysis of UDP-3-O-myristoyl-N-acetylglucosamine to form UDP-3-O-myristoylglucosamine and acetate, the committed step in lipid A biosynthesis. In Pseudomonas savastanoi pv. phaseolicola (strain 1448A / Race 6) (Pseudomonas syringae pv. phaseolicola (strain 1448A / Race 6)), this protein is UDP-3-O-acyl-N-acetylglucosamine deacetylase.